Consider the following 169-residue polypeptide: Procalin (169 aa).

An N-terminal signal peptide occupies residues Met1–Ala18. Disulfide bonds link Cys21/Cys125, Cys54/Cys168, and Cys83/Cys97.

Belongs to the calycin superfamily. Triabin family. Expressed in salivary glands.

The protein resides in the secreted. In Hospesneotomae protracta (Western bloodsucking conenose), this protein is Procalin.